A 270-amino-acid polypeptide reads, in one-letter code: Formamidopyrimidine-DNA glycosylase (270 aa).

The active-site Schiff-base intermediate with DNA is proline 2. Glutamate 3 serves as the catalytic Proton donor. Lysine 58 acts as the Proton donor; for beta-elimination activity in catalysis. Histidine 91, arginine 110, and arginine 151 together coordinate DNA. An FPG-type zinc finger spans residues 236 to 270; the sequence is FAYGRAGEFCKVCGTTLREVKLGQRASVYCPRCQR. Catalysis depends on arginine 260, which acts as the Proton donor; for delta-elimination activity.

It belongs to the FPG family. Monomer. It depends on Zn(2+) as a cofactor.

It carries out the reaction Hydrolysis of DNA containing ring-opened 7-methylguanine residues, releasing 2,6-diamino-4-hydroxy-5-(N-methyl)formamidopyrimidine.. The catalysed reaction is 2'-deoxyribonucleotide-(2'-deoxyribose 5'-phosphate)-2'-deoxyribonucleotide-DNA = a 3'-end 2'-deoxyribonucleotide-(2,3-dehydro-2,3-deoxyribose 5'-phosphate)-DNA + a 5'-end 5'-phospho-2'-deoxyribonucleoside-DNA + H(+). In terms of biological role, involved in base excision repair of DNA damaged by oxidation or by mutagenic agents. Acts as a DNA glycosylase that recognizes and removes damaged bases. Has a preference for oxidized purines, such as 7,8-dihydro-8-oxoguanine (8-oxoG). Has AP (apurinic/apyrimidinic) lyase activity and introduces nicks in the DNA strand. Cleaves the DNA backbone by beta-delta elimination to generate a single-strand break at the site of the removed base with both 3'- and 5'-phosphates. The protein is Formamidopyrimidine-DNA glycosylase of Ectopseudomonas mendocina (strain ymp) (Pseudomonas mendocina).